Here is a 437-residue protein sequence, read N- to C-terminus: Methylenetetrahydrofolate--tRNA-(uracil-5-)-methyltransferase TrmFO (437 aa).

10–15 is an FAD binding site; that stretch reads GGGLAG.

It belongs to the MnmG family. TrmFO subfamily. FAD is required as a cofactor.

Its subcellular location is the cytoplasm. It carries out the reaction uridine(54) in tRNA + (6R)-5,10-methylene-5,6,7,8-tetrahydrofolate + NADH + H(+) = 5-methyluridine(54) in tRNA + (6S)-5,6,7,8-tetrahydrofolate + NAD(+). It catalyses the reaction uridine(54) in tRNA + (6R)-5,10-methylene-5,6,7,8-tetrahydrofolate + NADPH + H(+) = 5-methyluridine(54) in tRNA + (6S)-5,6,7,8-tetrahydrofolate + NADP(+). Its function is as follows. Catalyzes the folate-dependent formation of 5-methyl-uridine at position 54 (M-5-U54) in all tRNAs. The protein is Methylenetetrahydrofolate--tRNA-(uracil-5-)-methyltransferase TrmFO of Geotalea daltonii (strain DSM 22248 / JCM 15807 / FRC-32) (Geobacter daltonii).